The chain runs to 377 residues: Terpene synthase 1 (377 aa).

The short motif at 81–86 is the DDxx(x)D/E motif element; sequence DDALDA. Residues 221-229 carry the NDxxSxxxD/E motif motif; sequence NDLVSYEKE. Positions 326 to 359 are disordered; the sequence is RKQSSSPNLTNSISIPTNNTNNSNNITSSPNKKQ. Residues 335–356 show a composition bias toward low complexity; that stretch reads TNSISIPTNNTNNSNNITSSPN.

This sequence belongs to the terpene synthase family.

It carries out the reaction (2E,6E)-farnesyl diphosphate = (2S,3R,6S,9S)-(-)-protoillud-7-ene + diphosphate. In terms of biological role, terpene synthase that converts its substrate farnesyl diphosphate (FPP) into the sesquiterpene protoillud-7-ene. In Dictyostelium purpureum (Slime mold), this protein is Terpene synthase 1.